We begin with the raw amino-acid sequence, 395 residues long: Protochlorophyllide reductase B, chloroplastic (395 aa).

Residues 1-59 (MALQAATSFLPSALSARKEGAAKDSAFFGVRLADGLKLDATSLGLRTKRVNTSSVAIRA) constitute a chloroplast transit peptide.

The protein belongs to the short-chain dehydrogenases/reductases (SDR) family. POR subfamily.

The protein resides in the plastid. It is found in the chloroplast. It catalyses the reaction chlorophyllide a + NADP(+) = protochlorophyllide a + NADPH + H(+). It functions in the pathway porphyrin-containing compound metabolism; chlorophyll biosynthesis. In terms of biological role, phototransformation of protochlorophyllide (Pchlide) to chlorophyllide (Chlide). The sequence is that of Protochlorophyllide reductase B, chloroplastic (PORB) from Hordeum vulgare (Barley).